Reading from the N-terminus, the 207-residue chain is Large ribosomal subunit protein uL4 (207 aa).

The disordered stretch occupies residues 52-75 (KNRSAVRGGGKKPWRQKGTGRARQ). Residues 60–71 (GGKKPWRQKGTG) are compositionally biased toward basic residues.

It belongs to the universal ribosomal protein uL4 family. In terms of assembly, part of the 50S ribosomal subunit.

Its function is as follows. One of the primary rRNA binding proteins, this protein initially binds near the 5'-end of the 23S rRNA. It is important during the early stages of 50S assembly. It makes multiple contacts with different domains of the 23S rRNA in the assembled 50S subunit and ribosome. Forms part of the polypeptide exit tunnel. The sequence is that of Large ribosomal subunit protein uL4 from Limosilactobacillus fermentum (strain NBRC 3956 / LMG 18251) (Lactobacillus fermentum).